A 205-amino-acid chain; its full sequence is MIGKLKGLIDSYGEDYVILDVQGVGYQVHCSARTLQALPQAGGAAVLSIETYVREDQIKLFGFRSDLEREWFRLLQTVQGVGAKVALAVLSTLPPADLANAIALRDKAAVARTSGVGPKVAERIVTELKDKAPAFASVDPAVVALSGALDERSAPRPVTDAISALVNLGYGQPQAAAAIASASRSAGEGAETAQLIKLGLKELSK.

Residues 1 to 64 (MIGKLKGLID…EDQIKLFGFR (64 aa)) form a domain I region. Residues 65–143 (SDLEREWFRL…AFASVDPAVV (79 aa)) are domain II. The segment at 144-153 (ALSGALDERS) is flexible linker. Residues 153-205 (SAPRPVTDAISALVNLGYGQPQAAAAIASASRSAGEGAETAQLIKLGLKELSK) are domain III.

Belongs to the RuvA family. Homotetramer. Forms an RuvA(8)-RuvB(12)-Holliday junction (HJ) complex. HJ DNA is sandwiched between 2 RuvA tetramers; dsDNA enters through RuvA and exits via RuvB. An RuvB hexamer assembles on each DNA strand where it exits the tetramer. Each RuvB hexamer is contacted by two RuvA subunits (via domain III) on 2 adjacent RuvB subunits; this complex drives branch migration. In the full resolvosome a probable DNA-RuvA(4)-RuvB(12)-RuvC(2) complex forms which resolves the HJ.

Its subcellular location is the cytoplasm. Functionally, the RuvA-RuvB-RuvC complex processes Holliday junction (HJ) DNA during genetic recombination and DNA repair, while the RuvA-RuvB complex plays an important role in the rescue of blocked DNA replication forks via replication fork reversal (RFR). RuvA specifically binds to HJ cruciform DNA, conferring on it an open structure. The RuvB hexamer acts as an ATP-dependent pump, pulling dsDNA into and through the RuvAB complex. HJ branch migration allows RuvC to scan DNA until it finds its consensus sequence, where it cleaves and resolves the cruciform DNA. This is Holliday junction branch migration complex subunit RuvA from Rhodopseudomonas palustris (strain BisB18).